We begin with the raw amino-acid sequence, 147 residues long: Allograft inflammatory factor 1 (147 aa).

N-acetylserine is present on S2. K11 is subject to N6-acetyllysine. At S39 the chain carries Phosphoserine. The EF-hand 1 domain maps to 45-80; it reads SKLEAFKTKYMEFDLNGNGDIDIMSLKRMLEKLGVP. D58, N60, N62, D64, E98, T100, and D105 together coordinate Ca(2+). Residues 81 to 115 form the EF-hand 2; degenerate domain; it reads KTHLELKKLIREVSSGSEETFSYSDFLRMMLGKRS. The segment at 127–147 is disordered; that stretch reads KNKEHQKPTGPPAKKAISELP.

Homodimer (Potential). Monomer. Interacts with LCP1. Cardiac allograft, spleen and testis. Expressed by inflammatory cells (macrophages and neutrophils).

The protein resides in the cytoplasm. The protein localises to the cytoskeleton. It localises to the cell projection. It is found in the ruffle membrane. Its subcellular location is the phagocytic cup. In terms of biological role, actin-binding protein that enhances membrane ruffling and RAC activation. Enhances the actin-bundling activity of LCP1. Binds calcium. Plays a role in RAC signaling and in phagocytosis. May play an role in macrophage activation and function. Promotes the proliferation of vascular smooth muscle cells and of T-lymphocytes. Enhances lymphocyte migration. Plays a role in vascular inflammation. This Rattus norvegicus (Rat) protein is Allograft inflammatory factor 1 (Aif1).